The following is a 349-amino-acid chain: Probable dual-specificity RNA methyltransferase RlmN (349 aa).

The Proton acceptor role is filled by glutamate 94. Positions 100–321 constitute a Radical SAM core domain; sequence DEDRATLCVS…TQHGVFATIR (222 aa). An intrachain disulfide couples cysteine 107 to cysteine 332. [4Fe-4S] cluster contacts are provided by cysteine 114, cysteine 118, and cysteine 121. S-adenosyl-L-methionine is bound by residues 159–160, serine 191, 213–215, and histidine 289; these read GE and SMH. The active-site S-methylcysteine intermediate is the cysteine 332.

It belongs to the radical SAM superfamily. RlmN family. The cofactor is [4Fe-4S] cluster.

The protein localises to the cytoplasm. The enzyme catalyses adenosine(2503) in 23S rRNA + 2 reduced [2Fe-2S]-[ferredoxin] + 2 S-adenosyl-L-methionine = 2-methyladenosine(2503) in 23S rRNA + 5'-deoxyadenosine + L-methionine + 2 oxidized [2Fe-2S]-[ferredoxin] + S-adenosyl-L-homocysteine. The catalysed reaction is adenosine(37) in tRNA + 2 reduced [2Fe-2S]-[ferredoxin] + 2 S-adenosyl-L-methionine = 2-methyladenosine(37) in tRNA + 5'-deoxyadenosine + L-methionine + 2 oxidized [2Fe-2S]-[ferredoxin] + S-adenosyl-L-homocysteine. Specifically methylates position 2 of adenine 2503 in 23S rRNA and position 2 of adenine 37 in tRNAs. The chain is Probable dual-specificity RNA methyltransferase RlmN from Phocaeicola vulgatus (strain ATCC 8482 / DSM 1447 / JCM 5826 / CCUG 4940 / NBRC 14291 / NCTC 11154) (Bacteroides vulgatus).